Reading from the N-terminus, the 232-residue chain is Lipoprotein-releasing system ATP-binding protein LolD 1 (232 aa).

In terms of domain architecture, ABC transporter spans 11-231 (VYLHDVKRQY…SIQDGLVVEL (221 aa)). 47–54 (APSGAGKS) provides a ligand contact to ATP.

Belongs to the ABC transporter superfamily. Lipoprotein translocase (TC 3.A.1.125) family. In terms of assembly, the complex is composed of two ATP-binding proteins (LolD) and two transmembrane proteins (LolC and LolE).

The protein localises to the cell inner membrane. Its function is as follows. Part of the ABC transporter complex LolCDE involved in the translocation of mature outer membrane-directed lipoproteins, from the inner membrane to the periplasmic chaperone, LolA. Responsible for the formation of the LolA-lipoprotein complex in an ATP-dependent manner. The chain is Lipoprotein-releasing system ATP-binding protein LolD 1 from Rhodopseudomonas palustris (strain BisB18).